The primary structure comprises 397 residues: CCA-adding enzyme (397 aa).

ATP is bound by residues Gly-26 and Arg-29. Positions 26 and 29 each coordinate CTP. Mg(2+) contacts are provided by Asp-39 and Asp-41. Positions 110, 153, 156, 159, and 162 each coordinate ATP. Arg-110, Asp-153, Arg-156, Arg-159, and Arg-162 together coordinate CTP.

It belongs to the tRNA nucleotidyltransferase/poly(A) polymerase family. Bacterial CCA-adding enzyme type 3 subfamily. As to quaternary structure, homodimer. Mg(2+) serves as cofactor.

The catalysed reaction is a tRNA precursor + 2 CTP + ATP = a tRNA with a 3' CCA end + 3 diphosphate. It catalyses the reaction a tRNA with a 3' CCA end + 2 CTP + ATP = a tRNA with a 3' CCACCA end + 3 diphosphate. Functionally, catalyzes the addition and repair of the essential 3'-terminal CCA sequence in tRNAs without using a nucleic acid template. Adds these three nucleotides in the order of C, C, and A to the tRNA nucleotide-73, using CTP and ATP as substrates and producing inorganic pyrophosphate. tRNA 3'-terminal CCA addition is required both for tRNA processing and repair. Also involved in tRNA surveillance by mediating tandem CCA addition to generate a CCACCA at the 3' terminus of unstable tRNAs. While stable tRNAs receive only 3'-terminal CCA, unstable tRNAs are marked with CCACCA and rapidly degraded. This is CCA-adding enzyme from Bacillus cereus (strain ATCC 10987 / NRS 248).